A 497-amino-acid polypeptide reads, in one-letter code: Probable malate:quinone oxidoreductase (497 aa).

Belongs to the MQO family. FAD serves as cofactor.

It catalyses the reaction (S)-malate + a quinone = a quinol + oxaloacetate. The protein operates within carbohydrate metabolism; tricarboxylic acid cycle; oxaloacetate from (S)-malate (quinone route): step 1/1. This is Probable malate:quinone oxidoreductase from Tolumonas auensis (strain DSM 9187 / NBRC 110442 / TA 4).